Reading from the N-terminus, the 851-residue chain is Nucleolar RNA helicase 2 (851 aa).

Residues Met-1–Phe-260 are disordered. Phosphoserine occurs at positions 7 and 13. 2 stretches are compositionally biased toward basic and acidic residues: residues Pro-26–Glu-42 and Glu-99–Ile-113. Lys-39 is subject to N6-acetyllysine. Tandem repeats lie at residues Pro-117–Gln-153, Pro-154–Gln-190, and Pro-191–Gln-227. Residues Pro-117 to Gln-227 are 3 X 37 AA tandem repeats. Position 118 is a phosphoserine (Ser-118). The span at Gly-133–Pro-145 shows a compositional bias: basic and acidic residues. Residue Lys-134 is modified to N6-acetyllysine. A phosphoserine mark is found at Ser-144, Ser-155, Ser-181, Ser-192, Ser-218, Ser-236, Ser-243, Ser-244, and Ser-245. The span at Gly-170–Pro-182 shows a compositional bias: basic and acidic residues. Positions Gly-207–Asp-223 are enriched in basic and acidic residues. Polar residues predominate over residues Ser-226 to Asp-237. Positions Glu-246–Glu-257 are enriched in basic and acidic residues. The short motif at Gly-258 to Ala-286 is the Q motif element. The region spanning Phe-289–Gln-468 is the Helicase ATP-binding domain. Residue Ala-302 to Thr-309 coordinates ATP. Thr-368 is subject to Phosphothreonine. The short motif at Asp-411–Asp-414 is the DEAD box element. The Helicase C-terminal domain maps to Asp-501–Lys-645. At Ser-639 the chain carries Phosphoserine. Lys-672 carries the post-translational modification N6-acetyllysine. A disordered region spans residues Gln-783–Gln-851. Repeat copies occupy residues Phe-807–Arg-811, Phe-817–Arg-823, and Phe-829–Arg-833. Residues Phe-807–Arg-833 form a 3 X 5 AA repeats region. N6-acetyllysine is present on Lys-847.

It belongs to the DEAD box helicase family. DDX21/DDX50 subfamily. In terms of assembly, homodimer; homodimerizes via its N-terminus. Found in a multi-helicase-TICAM1 complex at least composed of DHX36, DDX1, DDX21 and TICAM1; this complex exists in resting cells with or without poly(I:C) RNA ligand stimulation. Interacts (via C-terminus) with TICAM1 (via TIR domain). Interacts with DHX36 (via C-terminus); this interaction serves as bridges to TICAM1. Interacts (via C-terminus) with DDX1 (via B30.2/SPRY domain); this interaction serves as bridges to TICAM1. Component of the B-WICH complex, at least composed of SMARCA5/SNF2H, BAZ1B/WSTF, SF3B1, DEK, MYO1C, ERCC6, MYBBP1A and DDX21. Interacts with C1QBP. Interacts with JUN. Interacts with WDR46. Interacts with MCM3AP. Interacts with WDR43. Interacts with KPNA3. Interacts with GID4. Post-translationally, acetylation by CREBBP/CBP inhibits the helicase activity. Deacetylation by SIRT7 promotes the helicase activity and overcomes R-loop-mediated stalling of RNA polymerases. In terms of tissue distribution, highly expressed in liver and testis. Expressed at lower level in brain, lungs, and skeletal muscle.

It is found in the nucleus. The protein localises to the nucleolus. Its subcellular location is the nucleoplasm. It localises to the cytoplasm. The protein resides in the cytosol. It is found in the mitochondrion. It carries out the reaction ATP + H2O = ADP + phosphate + H(+). With respect to regulation, acetylation inhibits the helicase activity. Functionally, RNA helicase that acts as a sensor of the transcriptional status of both RNA polymerase (Pol) I and II: promotes ribosomal RNA (rRNA) processing and transcription from polymerase II (Pol II). Binds various RNAs, such as rRNAs, snoRNAs, 7SK and, at lower extent, mRNAs. In the nucleolus, localizes to rDNA locus, where it directly binds rRNAs and snoRNAs, and promotes rRNA transcription, processing and modification. Required for rRNA 2'-O-methylation, possibly by promoting the recruitment of late-acting snoRNAs SNORD56 and SNORD58 with pre-ribosomal complexes. In the nucleoplasm, binds 7SK RNA and is recruited to the promoters of Pol II-transcribed genes: acts by facilitating the release of P-TEFb from inhibitory 7SK snRNP in a manner that is dependent on its helicase activity, thereby promoting transcription of its target genes. Functions as cofactor for JUN-activated transcription: required for phosphorylation of JUN at 'Ser-77'. Can unwind double-stranded RNA (helicase) and can fold or introduce a secondary structure to a single-stranded RNA (foldase). Together with SIRT7, required to prevent R-loop-associated DNA damage and transcription-associated genomic instability: deacetylation by SIRT7 activates the helicase activity, thereby overcoming R-loop-mediated stalling of RNA polymerases. Involved in rRNA processing. May bind to specific miRNA hairpins. Component of a multi-helicase-TICAM1 complex that acts as a cytoplasmic sensor of viral double-stranded RNA (dsRNA) and plays a role in the activation of a cascade of antiviral responses including the induction of pro-inflammatory cytokines via the adapter molecule TICAM1. The polypeptide is Nucleolar RNA helicase 2 (Ddx21) (Mus musculus (Mouse)).